A 435-amino-acid polypeptide reads, in one-letter code: Diaminobutyrate--2-oxoglutarate transaminase (435 aa).

Lysine 266 carries the post-translational modification N6-(pyridoxal phosphate)lysine.

The protein belongs to the class-III pyridoxal-phosphate-dependent aminotransferase family. The cofactor is pyridoxal 5'-phosphate.

The enzyme catalyses L-2,4-diaminobutanoate + 2-oxoglutarate = L-aspartate 4-semialdehyde + L-glutamate. Its pathway is amine and polyamine biosynthesis; ectoine biosynthesis; L-ectoine from L-aspartate 4-semialdehyde: step 1/3. In terms of biological role, catalyzes reversively the conversion of L-aspartate beta-semialdehyde (ASA) to L-2,4-diaminobutyrate (DABA) by transamination with L-glutamate. This chain is Diaminobutyrate--2-oxoglutarate transaminase (ectB), found in Bordetella bronchiseptica (strain ATCC BAA-588 / NCTC 13252 / RB50) (Alcaligenes bronchisepticus).